The following is a 347-amino-acid chain: Ubiquinone biosynthesis protein coq-4, mitochondrial (347 aa).

Residues Met-1 to Phe-49 constitute a mitochondrion transit peptide. Residues His-185, Asp-186, His-189, and Glu-201 each coordinate Zn(2+). Residues Ile-284–Val-310 are disordered.

It belongs to the COQ4 family. Component of a multi-subunit COQ enzyme complex, composed of at least coq-3, coq-4, coq-5, coq-6, coq-7 and coq-9. Zn(2+) is required as a cofactor.

The protein resides in the mitochondrion inner membrane. It carries out the reaction a 4-hydroxy-3-methoxy-5-(all-trans-polyprenyl)benzoate + H(+) = a 2-methoxy-6-(all-trans-polyprenyl)phenol + CO2. The protein operates within cofactor biosynthesis; ubiquinone biosynthesis. In terms of biological role, lyase that catalyzes the C1-decarboxylation of 4-hydroxy-3-methoxy-5-(all-trans-polyprenyl)benzoic acid into 2-methoxy-6-(all-trans-polyprenyl)phenol during ubiquinone biosynthesis. The sequence is that of Ubiquinone biosynthesis protein coq-4, mitochondrial from Neurospora crassa (strain ATCC 24698 / 74-OR23-1A / CBS 708.71 / DSM 1257 / FGSC 987).